The primary structure comprises 980 residues: Alanine--tRNA ligase, mitochondrial (980 aa).

Residues 1 to 23 constitute a mitochondrion transit peptide; it reads MAVALAAAAGKLRRAIGRSCPWQ. ATP is bound by residues Arg105, His123, Trp205, and 235–237; that span reads LWN. L-alanine contacts are provided by Asn237 and Asp260. Gly264 is a binding site for ATP. Residues His627, His631, Cys744, and His748 each coordinate Zn(2+).

Belongs to the class-II aminoacyl-tRNA synthetase family. In terms of assembly, monomer. Zn(2+) is required as a cofactor.

The protein localises to the mitochondrion. The catalysed reaction is tRNA(Ala) + L-alanine + ATP = L-alanyl-tRNA(Ala) + AMP + diphosphate. It carries out the reaction (S)-lactate + ATP + H(+) = (S)-lactoyl-AMP + diphosphate. It catalyses the reaction (S)-lactoyl-AMP + L-lysyl-[protein] = N(6)-[(S)-lactoyl]-L-lysyl-[protein] + AMP + 2 H(+). Catalyzes the attachment of alanine to tRNA(Ala) in a two-step reaction: alanine is first activated by ATP to form Ala-AMP and then transferred to the acceptor end of tRNA(Ala). Also edits incorrectly charged tRNA(Ala) via its editing domain. In presence of high levels of lactate, also acts as a protein lactyltransferase that mediates lactylation of lysine residues in target proteins, such as CGAS. Acts as an inhibitor of cGAS/STING signaling by catalyzing lactylation of CGAS, preventing the formation of liquid-like droplets in which CGAS is activated. In Mus musculus (Mouse), this protein is Alanine--tRNA ligase, mitochondrial (Aars2).